The chain runs to 57 residues: MLKWAIIFAIISFISGVFGFRSTSAGTASIAKFLFFLFALITLVLLVLGLLGIGVVA.

Helical transmembrane passes span Met-1–Arg-21 and Phe-33–Ile-53.

Belongs to the UPF0391 family.

It localises to the cell membrane. In Nitrosomonas europaea (strain ATCC 19718 / CIP 103999 / KCTC 2705 / NBRC 14298), this protein is UPF0391 membrane protein NE0130.